The sequence spans 909 residues: Protein virilizer (909 aa).

The segment covering 746 to 784 (STSKNTNTNVSKQQQQPQNSTPCSSNRFLFNKSSLISQE) has biased composition (polar residues). Residues 746-824 (STSKNTNTNV…TNMTRQPTTL (79 aa)) form a disordered region. Positions 785–799 (SNGSNNNSGTQGPGS) are enriched in low complexity. The segment covering 800–810 (MNESYSLDNSF) has biased composition (polar residues). Residues 811 to 824 (NTTNTNMTRQPTTL) are compositionally biased toward low complexity. Phosphoserine is present on residues Ser856 and Ser898.

This sequence belongs to the vir family. In terms of assembly, component of the MIS (mRNA N6-methyladenosine (m6A) methylation) complex, at least composed of IME4, KAR4, MUM2, SLZ1, and VIR1. Interacts with KAR4. Interacts with SLZ1. Interacts with MUM2. Interacts with IME4.

Its subcellular location is the cytoplasm. It localises to the nucleus. The protein resides in the nucleolus. In terms of biological role, component of the MIS complex, a complex that mediates N6-methyladenosine (m6A) methylation of meiotic mRNAs and is required for initiation of meiosis, progression through the meiotic divisions and sporulation. In the complex, performs a scaffolding role stabilizing the other complex members. This Saccharomyces cerevisiae (strain ATCC 204508 / S288c) (Baker's yeast) protein is Protein virilizer.